The sequence spans 685 residues: Beta-taxilin (685 aa).

Positions 1–135 are disordered; that stretch reads MEINHPDQLS…KEPVSNKEQK (135 aa). Polar residues predominate over residues 18–28; that stretch reads GDSSSLNQNGP. Composition is skewed to basic and acidic residues over residues 47 to 67 and 80 to 90; these read GSLH…RQLE and RGKESTSETKE. Residues 98 to 113 show a composition bias toward acidic residues; the sequence is PDNEDVDYEETTEEID. Coiled coils occupy residues 138–354 and 381–470; these read KKIL…VLKE and NEVF…SEKE. A compositionally biased stretch (basic and acidic residues) spans 465–478; the sequence is KMSEKEDQVQRTSE. Disordered regions lie at residues 465 to 497 and 517 to 685; these read KMSE…EEAN and EFTP…NGVD. A phosphoserine mark is found at S477, S484, and S486. Acidic residues predominate over residues 479–495; that stretch reads EEPEPSVSENEEVDAEE. Low complexity predominate over residues 575 to 591; it reads CEATPAPTASCTPAEAE. The span at 612–627 shows a compositional bias: polar residues; it reads ANTSGQAPLSPAQGSL.

Belongs to the taxilin family. Binds to the C-terminal coiled coil region of syntaxin family members STX1A, STX3A and STX4A. Has a preference for STX1A. Specifically expressed in skeletal muscle.

In terms of biological role, promotes motor nerve regeneration. May be involved in intracellular vesicle traffic. The polypeptide is Beta-taxilin (Txlnb) (Mus musculus (Mouse)).